A 952-amino-acid chain; its full sequence is Ubiquitin carboxyl-terminal hydrolase CYLD (952 aa).

Residues 106-589 (CEERLSLFRN…LEIMIGKKKG (484 aa)) are interaction with TRIP. 2 consecutive CAP-Gly domains span residues 153-198 (LAER…VFVA) and 253-286 (DVLP…VQLC). Residues 311–350 (RRPPKLAFMSRGVGDKGSSSHNKPKVTGSTSDPGSRNRSE) are disordered. Positions 327-346 (GSSSHNKPKVTGSTSDPGSR) are enriched in polar residues. The residue at position 383 (Ser383) is a Phosphoserine. Positions 386–409 (EMSSDFGHSSPPPQPPSMNSLSSE) are disordered. The segment at 390-465 (DFGHSSPPPQ…LPISSGNAHG (76 aa)) is interaction with TRAF2. Residues Ser414 and Ser418 each carry the phosphoserine modification. The interval 466 to 680 (LEVGSLAEVK…FTSEEKDPEE (215 aa)) is interaction with IKBKG/NEMO. The 44-residue stretch at 488–531 (GQPPGLSDVLAGLELEDECAGCTDGTFRGTRYFTCALKKALFVK) folds into the CAP-Gly 3 domain. Residues 588–946 (KGIQGHYNSC…DAYMCMYQSP (359 aa)) enclose the USP domain. Residue Cys597 is the Nucleophile of the active site. The interval 777-829 (LEDTPRQCRICGGLAMYECRECYDDPDISAGKIKQFCKTCSTQVHLHPRRLNH) is B-box. 8 residues coordinate Zn(2+): Cys784, Cys787, Cys795, Cys798, Cys813, Cys816, His821, and His829. The active-site Proton acceptor is His867.

This sequence belongs to the peptidase C19 family. In terms of assembly, interacts (via CAP-Gly domain) with IKBKG/NEMO (via proline-rich C-terminal region). Interacts with TRAF2 and TRIP. Interacts with PLK1, DVL1, DVL3, MAVS, TBK1, IKKE and RIGI. Interacts (via CAP-Gly domain) with microtubules. Interacts with HDAC6 and BCL3. Interacts with MAP3K7. Identified in a complex with TRAF6 and SQSTM1. Interacts with OPTN and SQSTM1. Interacts with CEP350. Interacts with RNF31; the interaction is indirect and is mediated via SPATA2. Interacts with SPATA2 (via the PUB domain); the interaction is direct and recruits CYLD to the LUBAC complex, thereby regulating TNF-alpha-induced necroptosis. In terms of processing, phosphorylated on several serine residues by IKKA and/or IKKB in response to immune stimuli. Phosphorylation requires IKBKG. Phosphorylation abolishes TRAF2 deubiquitination, interferes with the activation of Jun kinases, and strongly reduces CD40-dependent gene activation by NF-kappa-B. Post-translationally, ubiquitinated. Polyubiquitinated in hepatocytes treated with palmitic acid. Ubiquitination is mediated by E3 ligase TRIM47 and leads to proteasomal degradation.

The protein localises to the cytoplasm. The protein resides in the perinuclear region. It localises to the cytoskeleton. It is found in the cell membrane. Its subcellular location is the microtubule organizing center. The protein localises to the centrosome. The protein resides in the spindle. It localises to the cilium basal body. The catalysed reaction is Thiol-dependent hydrolysis of ester, thioester, amide, peptide and isopeptide bonds formed by the C-terminal Gly of ubiquitin (a 76-residue protein attached to proteins as an intracellular targeting signal).. Its function is as follows. Deubiquitinase that specifically cleaves 'Lys-63'- and linear 'Met-1'-linked polyubiquitin chains and is involved in NF-kappa-B activation and TNF-alpha-induced necroptosis. Negatively regulates NF-kappa-B activation by deubiquitinating upstream signaling factors. Contributes to the regulation of cell survival, proliferation and differentiation via its effects on NF-kappa-B activation. Negative regulator of Wnt signaling. Inhibits HDAC6 and thereby promotes acetylation of alpha-tubulin and stabilization of microtubules. Plays a role in the regulation of microtubule dynamics, and thereby contributes to the regulation of cell proliferation, cell polarization, cell migration, and angiogenesis. Required for normal cell cycle progress and normal cytokinesis. Inhibits nuclear translocation of NF-kappa-B. Plays a role in the regulation of inflammation and the innate immune response, via its effects on NF-kappa-B activation. Dispensable for the maturation of intrathymic natural killer cells, but required for the continued survival of immature natural killer cells. Negatively regulates TNFRSF11A signaling and osteoclastogenesis. Involved in the regulation of ciliogenesis, allowing ciliary basal bodies to migrate and dock to the plasma membrane; this process does not depend on NF-kappa-B activation. Ability to remove linear ('Met-1'-linked) polyubiquitin chains regulates innate immunity and TNF-alpha-induced necroptosis: recruited to the LUBAC complex via interaction with SPATA2 and restricts linear polyubiquitin formation on target proteins. Regulates innate immunity by restricting linear polyubiquitin formation on RIPK2 in response to NOD2 stimulation. Involved in TNF-alpha-induced necroptosis by removing linear ('Met-1'-linked) polyubiquitin chains from RIPK1, thereby regulating the kinase activity of RIPK1. Negatively regulates intestinal inflammation by removing 'Lys-63' linked polyubiquitin chain of NLRP6, thereby reducing the interaction between NLRP6 and PYCARD/ASC and formation of the NLRP6 inflammasome. Does not catalyze deubiquitination of heterotypic 'Lys-63'-/'Lys-48'-linked branched ubiquitin chains. Removes 'Lys-63' linked polyubiquitin chain of MAP3K7, which inhibits phosphorylation and blocks downstream activation of the JNK-p38 kinase cascades. Also removes 'Lys-63'-linked polyubiquitin chains of MAP3K1 and MA3P3K3, which inhibit their interaction with MAP2K1 and MAP2K2. The polypeptide is Ubiquitin carboxyl-terminal hydrolase CYLD (Cyld) (Mus musculus (Mouse)).